We begin with the raw amino-acid sequence, 306 residues long: Glutaminase (306 aa).

Substrate contacts are provided by S64, N115, E159, N166, Y190, Y242, and V260.

This sequence belongs to the glutaminase family. As to quaternary structure, homotetramer.

The catalysed reaction is L-glutamine + H2O = L-glutamate + NH4(+). The polypeptide is Glutaminase (Vibrio cholerae serotype O1 (strain ATCC 39315 / El Tor Inaba N16961)).